We begin with the raw amino-acid sequence, 472 residues long: Sad1-interacting factor 3 (472 aa).

Disordered stretches follow at residues 1-47 (MSTK…PRFG) and 197-223 (SSGP…DKPD). The Lumenal segment spans residues 1-443 (MSTKDKLNLP…KSSADRKMNS (443 aa)). Over residues 30-40 (NSESTRITPQH) the composition is skewed to polar residues. A Phosphoserine modification is found at S42. The chain crosses the membrane as a helical span at residues 444-464 (ITWIIIILISLFVIIFTLEVI). Topologically, residues 465 to 472 (LRLRWAHR) are cytoplasmic.

This sequence belongs to the RMD1/sif2 family. As to quaternary structure, interacts with sad1.

The protein localises to the nucleus membrane. This Schizosaccharomyces pombe (strain 972 / ATCC 24843) (Fission yeast) protein is Sad1-interacting factor 3 (sif3).